We begin with the raw amino-acid sequence, 299 residues long: Protein LacX, plasmid (299 aa).

The protein is Protein LacX, plasmid (lacX) of Lactococcus lactis subsp. lactis (Streptococcus lactis).